The chain runs to 662 residues: LIM domain kinase 1 (662 aa).

LIM zinc-binding domains are found at residues 24–83 and 84–145; these read PVCA…RFGE and LCHG…MVVT. Positions 166–259 constitute a PDZ domain; the sequence is LVSIPACSDG…LLQLTIEHDP (94 aa). Positions 262 to 328 are disordered; that stretch reads PLPRDLALPC…ASQRKDIGRS (67 aa). Pro residues predominate over residues 272–287; sequence SPLPDPHSPLRSPVPA. A compositionally biased stretch (low complexity) spans 309-320; the sequence is SPGSSSVGSPAS. The Protein kinase domain occupies 346-611; the sequence is LIHGEVLGKG…PSFSKLEQWL (266 aa). ATP contacts are provided by residues 352 to 360 and Lys375; that span reads LGKGCFGQA. Asp467 is an active-site residue.

Belongs to the protein kinase superfamily. TKL Ser/Thr protein kinase family. As to expression, expressed predominantly in the brain.

Its subcellular location is the cytoplasm. It localises to the nucleus. The protein resides in the cytoskeleton. It is found in the cell projection. The protein localises to the growth cone. It carries out the reaction L-seryl-[protein] + ATP = O-phospho-L-seryl-[protein] + ADP + H(+). The enzyme catalyses L-threonyl-[protein] + ATP = O-phospho-L-threonyl-[protein] + ADP + H(+). Functionally, protein kinase which regulates actin filament dynamics. Phosphorylates and inactivates the actin binding/depolymerizing factor cofilin, thereby stabilizing the actin cytoskeleton. Required for motility of the axon growth cone. This chain is LIM domain kinase 1 (LIMK1), found in Gallus gallus (Chicken).